Reading from the N-terminus, the 85-residue chain is ATP synthase subunit c (85 aa).

2 consecutive transmembrane segments (helical) span residues 1–21 and 53–73; these read MLAW…ALVG and LLFA…VALI.

Belongs to the ATPase C chain family. In terms of assembly, F-type ATPases have 2 components, F(1) - the catalytic core - and F(0) - the membrane proton channel. F(1) has five subunits: alpha(3), beta(3), gamma(1), delta(1), epsilon(1). F(0) has three main subunits: a(1), b(2) and c(10-14). The alpha and beta chains form an alternating ring which encloses part of the gamma chain. F(1) is attached to F(0) by a central stalk formed by the gamma and epsilon chains, while a peripheral stalk is formed by the delta and b chains.

Its subcellular location is the cell inner membrane. F(1)F(0) ATP synthase produces ATP from ADP in the presence of a proton or sodium gradient. F-type ATPases consist of two structural domains, F(1) containing the extramembraneous catalytic core and F(0) containing the membrane proton channel, linked together by a central stalk and a peripheral stalk. During catalysis, ATP synthesis in the catalytic domain of F(1) is coupled via a rotary mechanism of the central stalk subunits to proton translocation. Functionally, key component of the F(0) channel; it plays a direct role in translocation across the membrane. A homomeric c-ring of between 10-14 subunits forms the central stalk rotor element with the F(1) delta and epsilon subunits. This is ATP synthase subunit c from Dictyoglomus turgidum (strain DSM 6724 / Z-1310).